Here is a 415-residue protein sequence, read N- to C-terminus: Styrene monooxygenase StyA (415 aa).

Belongs to the StyA family. In terms of assembly, homodimer. A direct interaction with the monooxygenase reductase component StyB seems not to be necessary for the enzymatic activity.

The enzyme catalyses styrene + FADH2 + O2 = (S)-styrene oxide + FAD + H2O + H(+). Its pathway is aromatic compound metabolism. Its function is as follows. Styrene monooxygenase which catalyzes the first step in the aerobic styrene degradation pathway by enantioselective epoxidation of the vinyl side chain. In a two-component system, a reductase utilizes NADH to reduce FAD, which is then transferred to the oxygenase; the electron transfer is proposed to occur via a diffusing flavin. This is Styrene monooxygenase StyA (styA) from Pseudomonas sp.